The sequence spans 372 residues: L-selectin (372 aa).

The N-terminal stretch at 1 to 28 (MIFPWKCQSTQRDLWNIFKLWGWTMLCC) is a signal peptide. Residues 29–38 (DFLAHHGTDC) constitute a propeptide that is removed on maturation. Topologically, residues 39–332 (WTYHYSEKPM…FSMIKEGDYN (294 aa)) are extracellular. The 101-residue stretch at 55–155 (RFCRDNYTDL…ACHKLKAALC (101 aa)) folds into the C-type lectin domain. 10 disulfides stabilise this stretch: C57-C155, C128-C147, C128-C160, C160-C171, C165-C180, C182-C191, C197-C241, C227-C254, C259-C303, and C289-C316. N-linked (GlcNAc...) asparagine glycosylation is found at N60 and N104. Positions 118, 120, 126, 143, and 144 each coordinate Ca(2+). Positions 156 to 192 (YTASCQPWSCSGHGECVEIINNYTCNCDVGYYGPQCQ) constitute an EGF-like domain. N177 carries N-linked (GlcNAc...) asparagine glycosylation. 2 consecutive Sushi domains span residues 195-256 (IQCE…TCQV) and 257-318 (IQCE…ICQK). 4 N-linked (GlcNAc...) asparagine glycosylation sites follow: N216, N232, N246, and N271. Residues 333 to 355 (PLFIPVAVMVTAFSGLAFIIWLA) traverse the membrane as a helical segment. The Cytoplasmic segment spans residues 356–372 (RRLKKGKKSKRSMDDPY).

The protein belongs to the selectin/LECAM family. Interaction with SELPLG/PSGL1 and PODXL2 is required for promoting recruitment and rolling of leukocytes. This interaction is dependent on the sialyl Lewis X glycan modification of SELPLG and PODXL2, and tyrosine sulfation modifications of SELPLG. Sulfation on 'Tyr-51' of SELPLG is important for L-selectin binding. N-glycosylated.

Its subcellular location is the cell membrane. Calcium-dependent lectin that mediates cell adhesion by binding to glycoproteins on neighboring cells. Mediates the adherence of lymphocytes to endothelial cells of high endothelial venules in peripheral lymph nodes. Promotes initial tethering and rolling of leukocytes in endothelia. This chain is L-selectin (SELL), found in Pan troglodytes (Chimpanzee).